Here is a 375-residue protein sequence, read N- to C-terminus: Alanine racemase (375 aa).

Residue Lys-38 is the Proton acceptor; specific for D-alanine of the active site. Lys-38 is modified (N6-(pyridoxal phosphate)lysine). A substrate-binding site is contributed by Arg-137. Tyr-266 serves as the catalytic Proton acceptor; specific for L-alanine. Position 314 (Met-314) interacts with substrate.

It belongs to the alanine racemase family. The cofactor is pyridoxal 5'-phosphate.

The enzyme catalyses L-alanine = D-alanine. Its pathway is amino-acid biosynthesis; D-alanine biosynthesis; D-alanine from L-alanine: step 1/1. Functionally, catalyzes the interconversion of L-alanine and D-alanine. May also act on other amino acids. This Cutibacterium acnes (strain DSM 16379 / KPA171202) (Propionibacterium acnes) protein is Alanine racemase (alr).